A 409-amino-acid chain; its full sequence is Pentatricopeptide repeat-containing protein At5g09450, mitochondrial (409 aa).

The N-terminal 38 residues, 1 to 38, are a transit peptide targeting the mitochondrion; sequence MATRSLFHSLRCRLTNNGVLGSNFIRNAESSRFSKSYN. PPR repeat units follow at residues 155–189, 191–225, 226–256, 262–296, 298–332, and 333–367; these read TAET…DSLT, GAIT…KVSP, DIFT…MRHD, GWVR…SISQ, EWIT…NQIL, and SSRS…KTTE.

The protein belongs to the PPR family. P subfamily.

It is found in the mitochondrion. The chain is Pentatricopeptide repeat-containing protein At5g09450, mitochondrial from Arabidopsis thaliana (Mouse-ear cress).